A 340-amino-acid chain; its full sequence is Alpha-1,3-galactosyltransferase 2 (340 aa).

Over 1–12 (MALKEGLRAWKR) the chain is Cytoplasmic. A helical; Signal-anchor for type II membrane protein transmembrane segment spans residues 13–32 (IFWRQILLTLGLLGLFLYGL). Topologically, residues 33–340 (PKFRHLEALI…APKGYRLLRN (308 aa)) are lumenal. Asparagine 58 and asparagine 100 each carry an N-linked (GlcNAc...) asparagine glycan. Positions 199 and 201 each coordinate Mn(2+).

The protein belongs to the glycosyltransferase 6 family. Mn(2+) serves as cofactor. Expressed in thymus and monocyte derived dendritic cells.

It localises to the golgi apparatus. The protein localises to the golgi stack membrane. It catalyses the reaction a beta-D-galactosyl-(1-&gt;4)-N-acetyl-beta-D-glucosaminyl derivative + UDP-alpha-D-galactose = an alpha-D-galactosyl-(1-&gt;3)-beta-D-galactosyl-(1-&gt;4)-N-acetyl-beta-D-glucosaminyl derivative + UDP + H(+). It carries out the reaction a beta-D-Gal-(1-&gt;4)-beta-D-Glc-(1&lt;-&gt;1)-Cer(d18:1(4E)) + UDP-alpha-D-galactose = an isogloboside iGb3Cer (d18:1(4E)) + UDP + H(+). The enzyme catalyses a globoside Gb3Cer + UDP-alpha-D-galactose = a globoside GalGb3Cer + UDP + H(+). Its function is as follows. Synthesizes the galactose-alpha(1,3)-galactose group on the glycosphingolipid isoglobotrihexosylceramide or isogloboside 3 (iGb3) by catalyzing the transfer of galactose from UDP-Galactose to its acceptor molecule Gal-beta-1,4-Glc-ceramide. Can also catalyze the addition of galactose to iGb3 itself to form polygalactose structures. The protein is Alpha-1,3-galactosyltransferase 2 of Homo sapiens (Human).